The chain runs to 132 residues: Nuclear transition protein 2 (132 aa).

Positions 1–20 are enriched in polar residues; it reads MDTKTQSLPNTHAQPHSNSR. Residues 1–132 are disordered; the sequence is MDTKTQSLPN…KRQSSGRKYN (132 aa). 6 residues coordinate Zn(2+): His12, His16, His24, Cys29, Cys31, and Cys35. Residues 37 to 59 show a composition bias toward basic residues; that stretch reads SRSRSRSCRSRSSSRRPRSHRSP. The span at 82 to 94 shows a compositional bias: polar residues; sequence SHQCPSRPVTHSC. The Nuclear localization signal signature appears at 105–113; the sequence is GKVIKRKQV. A compositionally biased stretch (basic residues) spans 108 to 132; it reads IKRKQVKRSKQVYKRKRQSSGRKYN. Ser127 bears the Phosphoserine mark.

It belongs to the nuclear transition protein 2 family. In terms of tissue distribution, testis.

It is found in the nucleus. The protein resides in the nucleolus. It localises to the chromosome. Plays a key role in the replacement of histones to protamine in the elongating spermatids of mammals. In condensing spermatids, loaded onto the nucleosomes, where it promotes the recruitment and processing of protamines, which are responsible for histone eviction. In Bos taurus (Bovine), this protein is Nuclear transition protein 2 (TNP2).